Reading from the N-terminus, the 142-residue chain is Large ribosomal subunit protein uL13 (142 aa).

This sequence belongs to the universal ribosomal protein uL13 family. In terms of assembly, part of the 50S ribosomal subunit.

This protein is one of the early assembly proteins of the 50S ribosomal subunit, although it is not seen to bind rRNA by itself. It is important during the early stages of 50S assembly. The protein is Large ribosomal subunit protein uL13 of Shewanella baltica (strain OS185).